The following is a 440-amino-acid chain: Actin-like protein 7A (440 aa).

A disordered region spans residues 1 to 29; the sequence is MSLDGVWAPQTANIGDGPAKKASDQASMQ. The interval 36 to 56 is required for interaction with TES; it reads ASLKDGPAKRAVWVRRDNAET.

The protein belongs to the actin family. Interacts (via N-terminus) with TES (via LIM domain 2). Heterodimer with TES; the heterodimer interacts with ENAH to form a heterotrimer. Interacts with ACTL9. Interacts with CYLC1; the interaction may be relevant for proper acrosome attachment to the nuclear envelope. Detected in testis. Detected at the acrosome of round spermatids (at protein level). Detected in adult and embryonic testis. Detected in developing male germ cells.

The protein localises to the cytoplasm. The protein resides in the cytoskeleton. It is found in the golgi apparatus. Its subcellular location is the nucleus. It localises to the cytoplasmic vesicle. The protein localises to the secretory vesicle. The protein resides in the acrosome. In terms of biological role, essential for normal spermatogenesis and male fertility. Required for normal sperm head morphology, acroplaxome formation, acrosome attachment, and acrosome granule stability. May anchor and stabilize acrosomal adherence to the acroplaxome at least in part by facilitating the presence of F-actin in the subacrosomal space. May play an important role in formation and fusion of Golgi-derived vesicles during acrosome biogenesis. The chain is Actin-like protein 7A (Actl7a) from Mus musculus (Mouse).